We begin with the raw amino-acid sequence, 227 residues long: UPF0758 protein CPF_2399 (227 aa).

One can recognise an MPN domain in the interval 105-227; the sequence is KISKPSDVAK…FISLKEKDIL (123 aa). Zn(2+) is bound by residues histidine 176, histidine 178, and aspartate 189. The JAMM motif motif lies at 176-189; sequence HNHPSGDPTPSRDD.

Belongs to the UPF0758 family.

The protein is UPF0758 protein CPF_2399 of Clostridium perfringens (strain ATCC 13124 / DSM 756 / JCM 1290 / NCIMB 6125 / NCTC 8237 / Type A).